The following is a 187-amino-acid chain: Elongation factor P (187 aa).

This sequence belongs to the elongation factor P family.

It localises to the cytoplasm. It functions in the pathway protein biosynthesis; polypeptide chain elongation. Involved in peptide bond synthesis. Stimulates efficient translation and peptide-bond synthesis on native or reconstituted 70S ribosomes in vitro. Probably functions indirectly by altering the affinity of the ribosome for aminoacyl-tRNA, thus increasing their reactivity as acceptors for peptidyl transferase. The chain is Elongation factor P (efp) from Treponema pallidum (strain Nichols).